Consider the following 379-residue polypeptide: All-trans-retinol dehydrogenase [NAD(+)] ADH4 (379 aa).

Thr1 is subject to N-acetylthreonine. Residues Cys46, His68, Cys98, Cys101, Cys104, Cys112, and Cys179 each contribute to the Zn(2+) site. Residues 204 to 209, Asp228, Lys233, 297 to 299, and Arg374 each bind NAD(+); these read GLGGVG and VGV.

The protein belongs to the zinc-containing alcohol dehydrogenase family. Class-II subfamily. As to quaternary structure, homodimer. Zn(2+) is required as a cofactor.

The protein resides in the cytoplasm. It carries out the reaction all-trans-retinol + NAD(+) = all-trans-retinal + NADH + H(+). The catalysed reaction is 9-cis-retinol + NAD(+) = 9-cis-retinal + NADH + H(+). It catalyses the reaction 20-oxo-(5Z,8Z,11Z,14Z)-eicosatetraenoate + NAD(+) + H2O = (5Z,8Z,11Z,14Z)-eicosatetraenedioate + NADH + 2 H(+). The enzyme catalyses 20-hydroxy-(5Z,8Z,11Z,14Z)-eicosatetraenoate + NAD(+) = 20-oxo-(5Z,8Z,11Z,14Z)-eicosatetraenoate + NADH + H(+). It carries out the reaction 1,4-benzoquinone + NADH + H(+) = hydroquinone + NAD(+). Its activity is regulated as follows. Oxidation of 20-HETE is inhibited by low concentrations of N-heptylformamide. Oxidation of 20-HETE is a decreased by 55-65% by either all-trans-retinol or all-trans-retinoic acid. Strongly inhibited by omega-hydroxy fatty acids. Its function is as follows. Catalyzes the NAD-dependent oxidation of either all-trans-retinol or 9-cis-retinol. Also oxidizes long chain omega-hydroxy fatty acids, such as 20-HETE, producing both the intermediate aldehyde, 20-oxoarachidonate and the end product, a dicarboxylic acid, (5Z,8Z,11Z,14Z)-eicosatetraenedioate. Also catalyzes the reduction of benzoquinones. The sequence is that of All-trans-retinol dehydrogenase [NAD(+)] ADH4 from Struthio camelus (Common ostrich).